The sequence spans 320 residues: Metapyrocatechase 2 (320 aa).

2 disordered regions span residues 1 to 21 (MDTH…RPRH) and 131 to 153 (GPKT…GQRG). VOC domains lie at 25 to 131 (SIDH…VKIG) and 167 to 282 (RLSH…YSAD). Fe cation contacts are provided by His-170, His-227, and Glu-278.

This sequence belongs to the extradiol ring-cleavage dioxygenase family. It depends on Fe(2+) as a cofactor.

It carries out the reaction catechol + O2 = (2Z,4E)-2-hydroxy-6-oxohexa-2,4-dienoate + H(+). This chain is Metapyrocatechase 2 (mcpII), found in Cupriavidus necator (Alcaligenes eutrophus).